The chain runs to 43 residues: Protein PsbN (43 aa).

The chain crosses the membrane as a helical span at residues 7-29 (ITIFLSGLLVSFTGYALYTAFGQ).

Belongs to the PsbN family.

It is found in the plastid membrane. Its function is as follows. May play a role in photosystem I and II biogenesis. The protein is Protein PsbN of Cuscuta reflexa (Southern Asian dodder).